The primary structure comprises 397 residues: 2,3,4,5-tetrahydropyridine-2,6-dicarboxylate N-succinyltransferase (397 aa).

The Acyl-anhydride intermediate role is filled by Glu-265. Succinyl-CoA contacts are provided by residues Arg-267, Gly-282, Ser-285, Ala-308, 323–324 (DA), Gly-331, Lys-360, and 373–376 (RQNS).

It belongs to the type 2 tetrahydrodipicolinate N-succinyltransferase family. Homotrimer.

Its subcellular location is the cytoplasm. It catalyses the reaction (S)-2,3,4,5-tetrahydrodipicolinate + succinyl-CoA + H2O = (S)-2-succinylamino-6-oxoheptanedioate + CoA. The protein operates within amino-acid biosynthesis; L-lysine biosynthesis via DAP pathway; LL-2,6-diaminopimelate from (S)-tetrahydrodipicolinate (succinylase route): step 1/3. Its function is as follows. Catalyzes the conversion of the cyclic tetrahydrodipicolinate (THDP) into the acyclic N-succinyl-L-2-amino-6-oxopimelate using succinyl-CoA. The chain is 2,3,4,5-tetrahydropyridine-2,6-dicarboxylate N-succinyltransferase from Sulfurovum sp. (strain NBC37-1).